An 89-amino-acid chain; its full sequence is Small ribosomal subunit protein uS14 (89 aa).

This sequence belongs to the universal ribosomal protein uS14 family. In terms of assembly, part of the 30S ribosomal subunit. Contacts proteins S3 and S10.

Functionally, binds 16S rRNA, required for the assembly of 30S particles and may also be responsible for determining the conformation of the 16S rRNA at the A site. The polypeptide is Small ribosomal subunit protein uS14 (Exiguobacterium sibiricum (strain DSM 17290 / CCUG 55495 / CIP 109462 / JCM 13490 / 255-15)).